A 138-amino-acid polypeptide reads, in one-letter code: 6,7-dimethyl-8-ribityllumazine synthase (138 aa).

Residues Phe-13, 45–47, and 69–71 each bind 5-amino-6-(D-ribitylamino)uracil; these read VFD and AVI. 74–75 lines the (2S)-2-hydroxy-3-oxobutyl phosphate pocket; that stretch reads AT. Residue His-77 is the Proton donor of the active site. Leu-102 serves as a coordination point for 5-amino-6-(D-ribitylamino)uracil. Arg-117 is a (2S)-2-hydroxy-3-oxobutyl phosphate binding site.

The protein belongs to the DMRL synthase family.

The catalysed reaction is (2S)-2-hydroxy-3-oxobutyl phosphate + 5-amino-6-(D-ribitylamino)uracil = 6,7-dimethyl-8-(1-D-ribityl)lumazine + phosphate + 2 H2O + H(+). Its pathway is cofactor biosynthesis; riboflavin biosynthesis; riboflavin from 2-hydroxy-3-oxobutyl phosphate and 5-amino-6-(D-ribitylamino)uracil: step 1/2. In terms of biological role, catalyzes the formation of 6,7-dimethyl-8-ribityllumazine by condensation of 5-amino-6-(D-ribitylamino)uracil with 3,4-dihydroxy-2-butanone 4-phosphate. This is the penultimate step in the biosynthesis of riboflavin. This is 6,7-dimethyl-8-ribityllumazine synthase from Methanobrevibacter smithii (strain ATCC 35061 / DSM 861 / OCM 144 / PS).